Reading from the N-terminus, the 464-residue chain is Soluble pyridine nucleotide transhydrogenase (464 aa).

An FAD-binding site is contributed by 35 to 44 (EDKSQVGGNC).

Belongs to the class-I pyridine nucleotide-disulfide oxidoreductase family. FAD is required as a cofactor.

Its subcellular location is the cytoplasm. The enzyme catalyses NAD(+) + NADPH = NADH + NADP(+). In terms of biological role, conversion of NADPH, generated by peripheral catabolic pathways, to NADH, which can enter the respiratory chain for energy generation. The protein is Soluble pyridine nucleotide transhydrogenase of Hahella chejuensis (strain KCTC 2396).